We begin with the raw amino-acid sequence, 135 residues long: Interleukin-4 (135 aa).

The first 24 residues, 1–24 (MGLTSQLIPVLVCLLACTSHFVHG), serve as a signal peptide directing secretion. Cystine bridges form between Cys27/Cys135, Cys48/Cys85, and Cys70/Cys105. N-linked (GlcNAc...) asparagine glycans are attached at residues Asn62 and Asn96.

This sequence belongs to the IL-4/IL-13 family.

The protein resides in the secreted. Its function is as follows. Participates in at least several B-cell activation processes as well as of other cell types. It is a costimulator of DNA-synthesis. It induces the expression of class II MHC molecules on resting B-cells. It enhances both secretion and cell surface expression of IgE and IgG1. It also regulates the expression of the low affinity Fc receptor for IgE (CD23) on both lymphocytes and monocytes. Positively regulates IL31RA expression in macrophages. Stimulates autophagy in dendritic cells by interfering with mTORC1 signaling and through the induction of RUFY4. The sequence is that of Interleukin-4 (IL4) from Cervus elaphus (Red deer).